The sequence spans 343 residues: LRP2-binding protein (343 aa).

The TPR repeat unit spans residues 58–91 (SQATFLLGQLHYVQGCYAEAELIFDRIKDKDPQA). Sel1-like repeat units lie at residues 92 to 124 (LYQLAVIYYDGLGTKEDLGRAVEYMGRVAFWDS), 132 to 167 (YAALYNLGQAYLEGFGVQASSSEAERLWLLAADNGN), 172 to 205 (VKAQSALGMFYSRPESLDLRKAFFWHSQACGNGS), 206 to 241 (LESQAALGLMYLYGHGVQRDSDSALFCLKEAAERGS), 242 to 273 (VYAQGHLTACYYRRQLYSRAAALGQRVCEYKD), and 293 to 328 (AIGMFYYARCLHLGRGVPQNRDKAKHYCTQAVRIDP).

Its subcellular location is the cytoplasm. In terms of biological role, may act as an adapter that regulates LRP2 function. This is LRP2-binding protein (lrp2bp) from Danio rerio (Zebrafish).